We begin with the raw amino-acid sequence, 273 residues long: Undecaprenyl-diphosphatase (273 aa).

8 consecutive transmembrane segments (helical) span residues 18–40 (GLTE…LLGF), 45–65 (AKTF…VVFW), 92–112 (GHIL…HEQI), 114–134 (AIFA…LLLA), 151–171 (LTYL…WPGF), 189–209 (YAAS…ATVL), 225–245 (MFAI…KFFL), and 253–273 (FVPF…ILIG).

Belongs to the UppP family.

Its subcellular location is the cell inner membrane. It carries out the reaction di-trans,octa-cis-undecaprenyl diphosphate + H2O = di-trans,octa-cis-undecaprenyl phosphate + phosphate + H(+). Catalyzes the dephosphorylation of undecaprenyl diphosphate (UPP). Confers resistance to bacitracin. The protein is Undecaprenyl-diphosphatase of Sodalis glossinidius (strain morsitans).